The sequence spans 312 residues: MKVAVLGAAGGIGQALALLLKTQLPSGSELSLYDIAPVTPGVAVDLSHIPTDVKIKGFSGEDATPALEGADVVLISAGVARKPGMDRSDLFNVNAGIVKNLVQQIAKTCPQACIGIITNPVNTTVAIAAEVLKKAGVYDKNKLFGVTTLDIIRSNTFVAELKGKSATEVEVPVIGGHSGVTILPLLSQIPGVSFSDQEIADLTKRIQNAGTEVVEAKAGGGSATLSMGQAAARFGLSLVRAMQGEKGVVECAYVEGDGHYARFFSQPLLLGKNGVEERQSIGKLSAFEQQALEGMLDTLKKDIALGEDFVNK.

Residues 7–13 and aspartate 34 contribute to the NAD(+) site; that span reads GAAGGIG. Positions 81 and 87 each coordinate substrate. NAD(+)-binding positions include asparagine 94 and 117-119; that span reads ITN. 2 residues coordinate substrate: asparagine 119 and arginine 153. Histidine 177 (proton acceptor) is an active-site residue. NAD(+) is bound at residue methionine 227.

It belongs to the LDH/MDH superfamily. MDH type 1 family. In terms of assembly, homodimer.

It catalyses the reaction (S)-malate + NAD(+) = oxaloacetate + NADH + H(+). Its function is as follows. Catalyzes the reversible oxidation of malate to oxaloacetate. The sequence is that of Malate dehydrogenase (mdh) from Klebsiella pneumoniae subsp. pneumoniae (strain ATCC 700721 / MGH 78578).